The following is a 307-amino-acid chain: Reaction center protein M chain (307 aa).

The next 3 membrane-spanning stretches (helical) occupy residues 52-78, 110-139, and 142-167; these read LGIA…WYQA, QGGV…ADQL, and GKHM…PILM. (7R,8Z)-bacteriochlorophyll b contacts are provided by H181 and H201. Residues 197 to 225 traverse the membrane as a helical segment; the sequence is YNPFHGLSIAALYGSALLFAMHGATILAV. H218 and E233 together coordinate Fe cation. Residue W251 coordinates a ubiquinone. The chain crosses the membrane as a helical span at residues 259 to 285; it reads ATMEGIHRWAIWMAVMVTLTGGIGILL. Residue H265 coordinates Fe cation.

The protein belongs to the reaction center PufL/M/PsbA/D family. As to quaternary structure, reaction center is composed of four bacteriochlorophylls, two bacteriopheophytins, two ubiquinones, one iron, and three highly hydrophobic polypeptide chains (designated L, M, and H).

The protein localises to the cellular chromatophore membrane. Its function is as follows. The reaction center is a membrane-bound complex that mediates the initial photochemical event in the electron transfer process of photosynthesis. This is Reaction center protein M chain (pufM) from Rhodobacter capsulatus (Rhodopseudomonas capsulata).